Reading from the N-terminus, the 364-residue chain is 3-dehydroquinate synthase (364 aa).

NAD(+)-binding positions include 73 to 78 (DGEQNK), 107 to 111 (GVIGD), 131 to 132 (TT), lysine 144, lysine 153, and 171 to 174 (CLCT). Positions 186, 249, and 266 each coordinate Zn(2+).

It belongs to the sugar phosphate cyclases superfamily. Dehydroquinate synthase family. Requires NAD(+) as cofactor. The cofactor is Co(2+). Zn(2+) is required as a cofactor.

The protein resides in the cytoplasm. The enzyme catalyses 7-phospho-2-dehydro-3-deoxy-D-arabino-heptonate = 3-dehydroquinate + phosphate. Its pathway is metabolic intermediate biosynthesis; chorismate biosynthesis; chorismate from D-erythrose 4-phosphate and phosphoenolpyruvate: step 2/7. Catalyzes the conversion of 3-deoxy-D-arabino-heptulosonate 7-phosphate (DAHP) to dehydroquinate (DHQ). This Blochmanniella floridana protein is 3-dehydroquinate synthase.